We begin with the raw amino-acid sequence, 777 residues long: Endonuclease MutS2 (777 aa).

Residue 328-335 coordinates ATP; the sequence is GPNTGGKT. Residues 702–777 enclose the Smr domain; that stretch reads LDLRGKRYEE…GSGCTIATLG (76 aa).

This sequence belongs to the DNA mismatch repair MutS family. MutS2 subfamily. In terms of assembly, homodimer. Binds to stalled ribosomes, contacting rRNA.

Endonuclease that is involved in the suppression of homologous recombination and thus may have a key role in the control of bacterial genetic diversity. In terms of biological role, acts as a ribosome collision sensor, splitting the ribosome into its 2 subunits. Detects stalled/collided 70S ribosomes which it binds and splits by an ATP-hydrolysis driven conformational change. Acts upstream of the ribosome quality control system (RQC), a ribosome-associated complex that mediates the extraction of incompletely synthesized nascent chains from stalled ribosomes and their subsequent degradation. Probably generates substrates for RQC. This Streptococcus uberis (strain ATCC BAA-854 / 0140J) protein is Endonuclease MutS2.